The chain runs to 156 residues: MKNQIYMEFYKKLKEIVEPICEKYSYELVDLEYRREPHGWVLRVYIDKVGGVTVEDCAYLSEKISKELDIKDPIPHSYILEVSSPGLDRPLKRKRDFERHMGEKVNITLLEEIEGKKKFEGKIFKVDESSVTLKIDDSFVTIPLEKIKKAMLIVEF.

This sequence belongs to the RimP family.

It localises to the cytoplasm. Its function is as follows. Required for maturation of 30S ribosomal subunits. The sequence is that of Ribosome maturation factor RimP from Dictyoglomus thermophilum (strain ATCC 35947 / DSM 3960 / H-6-12).